A 291-amino-acid chain; its full sequence is Phosphatidylserine decarboxylase proenzyme 2 (291 aa).

Catalysis depends on charge relay system; for autoendoproteolytic cleavage activity residues Asp112 and Ser251. Catalysis depends on Ser251, which acts as the Schiff-base intermediate with substrate; via pyruvic acid; for decarboxylase activity. Pyruvic acid (Ser); by autocatalysis is present on Ser251.

This sequence belongs to the phosphatidylserine decarboxylase family. PSD-B subfamily. Prokaryotic type II sub-subfamily. In terms of assembly, heterodimer of a large membrane-associated beta subunit and a small pyruvoyl-containing alpha subunit. The cofactor is pyruvate. Post-translationally, is synthesized initially as an inactive proenzyme. Formation of the active enzyme involves a self-maturation process in which the active site pyruvoyl group is generated from an internal serine residue via an autocatalytic post-translational modification. Two non-identical subunits are generated from the proenzyme in this reaction, and the pyruvate is formed at the N-terminus of the alpha chain, which is derived from the carboxyl end of the proenzyme. The autoendoproteolytic cleavage occurs by a canonical serine protease mechanism, in which the side chain hydroxyl group of the serine supplies its oxygen atom to form the C-terminus of the beta chain, while the remainder of the serine residue undergoes an oxidative deamination to produce ammonia and the pyruvoyl prosthetic group on the alpha chain. During this reaction, the Ser that is part of the protease active site of the proenzyme becomes the pyruvoyl prosthetic group, which constitutes an essential element of the active site of the mature decarboxylase.

The protein resides in the cell membrane. It catalyses the reaction a 1,2-diacyl-sn-glycero-3-phospho-L-serine + H(+) = a 1,2-diacyl-sn-glycero-3-phosphoethanolamine + CO2. It participates in phospholipid metabolism; phosphatidylethanolamine biosynthesis; phosphatidylethanolamine from CDP-diacylglycerol: step 2/2. Functionally, catalyzes the formation of phosphatidylethanolamine (PtdEtn) from phosphatidylserine (PtdSer). The polypeptide is Phosphatidylserine decarboxylase proenzyme 2 (Clostridium acetobutylicum (strain ATCC 824 / DSM 792 / JCM 1419 / IAM 19013 / LMG 5710 / NBRC 13948 / NRRL B-527 / VKM B-1787 / 2291 / W)).